Reading from the N-terminus, the 137-residue chain is Probable leaf thionin (137 aa).

The N-terminal stretch at 1–28 (MATNKSIKSVVICVLILGLVLEQVQVEG) is a signal peptide. Intrachain disulfides connect Cys31–Cys68, Cys32–Cys60, Cys40–Cys58, and Cys44–Cys54. The propeptide at 75–137 (LNLLPESGEP…DGDVIQSVEA (63 aa)) is acidic domain.

This sequence belongs to the plant thionin (TC 1.C.44) family. 4 C-C subfamily.

Its subcellular location is the secreted. Functionally, thionins are small plant proteins which are toxic to animal cells. They seem to exert their toxic effect at the level of the cell membrane. Their precise function is not known. This Hordeum vulgare (Barley) protein is Probable leaf thionin.